Reading from the N-terminus, the 156-residue chain is Small ribosomal subunit protein uS7 (156 aa).

The protein belongs to the universal ribosomal protein uS7 family. Part of the 30S ribosomal subunit. Contacts proteins S9 and S11.

One of the primary rRNA binding proteins, it binds directly to 16S rRNA where it nucleates assembly of the head domain of the 30S subunit. Is located at the subunit interface close to the decoding center, probably blocks exit of the E-site tRNA. The chain is Small ribosomal subunit protein uS7 from Bordetella petrii (strain ATCC BAA-461 / DSM 12804 / CCUG 43448).